A 1206-amino-acid polypeptide reads, in one-letter code: Translocase of chloroplast 132, chloroplastic (1206 aa).

Residue glycine 2 is modified to N-acetylglycine. Residues 13-33 (REDKKLAEDRISDEQVVKNEL) adopt a coiled-coil conformation. 2 disordered regions span residues 33–75 (LVRS…SDDL) and 97–119 (VGDL…VGES). A compositionally biased stretch (acidic residues) spans 39 to 49 (VRDDNEDEVFE). Residue serine 195 is modified to Phosphoserine. The tract at residues 233–499 (QTEQEVEEGE…TTTEADEHDE (267 aa)) is disordered. Residues 309–324 (AYTSNIVTNASGDNEV) show a composition bias toward polar residues. Over residues 325–336 (SSAVTSSPLEES) the composition is skewed to low complexity. Phosphoserine occurs at positions 337, 363, and 398. Residues 357–379 (LASSPHSYPESTEVHSNSGSPGV) are compositionally biased toward polar residues. Over residues 403-427 (KELEKQQSSRVHVDPEITENSHVET) the composition is skewed to basic and acidic residues. Positions 430-440 (EVVSSVSPTES) are enriched in low complexity. Polar residues predominate over residues 468–492 (APQQSRVNGNGSHNQFQQAEDSTTT). The AIG1-type G domain occupies 572-801 (DFSCTIMVLG…KLQDNIPGRP (230 aa)). The segment at 581 to 588 (GKSGVGKS) is G1. GTP is bound by residues 584–589 (GVGKSA) and 603–608 (DAFQMG). Residue serine 588 participates in Mg(2+) binding. Residues 603–606 (DAFQ) are homodimerization. The interval 607–611 (MGTKR) is G2. Residues 628 to 631 (DTPG) form a G3 region. The tract at residues 666–671 (RLDMQS) is homodimerization. Residues 700-703 (THAA) are G4. Residues histidine 701 and 749–750 (EN) contribute to the GTP site. The interval 749 to 751 (ENH) is G5. The disordered stretch occupies residues 824–862 (QPKLPEQQYGDEEDEDDLEESSDSDEESEYDQLPPFKSL). A compositionally biased stretch (acidic residues) spans 832–853 (YGDEEDEDDLEESSDSDEESEY). Residues 1182 to 1199 (LAMVAIVPLFKKLLSYYY) traverse the membrane as a helical segment.

This sequence belongs to the TRAFAC class TrmE-Era-EngA-EngB-Septin-like GTPase superfamily. AIG1/Toc34/Toc159-like paraseptin GTPase family. TOC159 subfamily. Homodimer. Part of the TOC core complex that includes 1 protein for the specific recognition of transit peptides surrounded by a ring composed of four proteins forming translocation channels, and four to five GTP-binding proteins providing energy. This core complex can interact with components of the TIC complex to form a larger import complex. Chloroplastic protein precursor such as prSS (precursor of the RuBisCO small subunit) interacts with these complexes. The TOC complex contains a specific subset of polar lipids such as digalactosyldiacylglyceride (DGDG), phosphatidylcholine (PC) and phosphatidylglycerol (PG). Requires Mg(2+) as cofactor. Phosphorylated by KOC1. Expressed in seedlings, leaves, flowers, and roots.

It localises to the plastid. The protein resides in the chloroplast outer membrane. It is found in the cytoplasm. Its function is as follows. GTPase involved in protein precursor import into chloroplasts. Seems to recognize chloroplast-destined precursor proteins and regulate their presentation to the translocation channel through GTP hydrolysis. Probably specialized in the import of nuclear encoded non-photosynthetic preproteins from the cytoplasm to the chloroplast. This Arabidopsis thaliana (Mouse-ear cress) protein is Translocase of chloroplast 132, chloroplastic.